A 51-amino-acid polypeptide reads, in one-letter code: ATP synthase F(1) complex subunit epsilon, mitochondrial (51 aa).

Residues Lys-21, Lys-32, and Lys-37 each carry the N6-acetyllysine; alternate modification. Residues Lys-21, Lys-32, and Lys-37 each carry the N6-succinyllysine; alternate modification. Lys-44 is subject to N6-acetyllysine.

This sequence belongs to the eukaryotic ATPase epsilon family. In terms of assembly, component of the ATP synthase complex composed at least of ATP5F1A/subunit alpha, ATP5F1B/subunit beta, ATP5MC1/subunit c (homooctomer), MT-ATP6/subunit a, MT-ATP8/subunit 8, ATP5ME/subunit e, ATP5MF/subunit f, ATP5MG/subunit g, ATP5MK/subunit k, ATP5MJ/subunit j, ATP5F1C/subunit gamma, ATP5F1D/subunit delta, ATP5F1E/subunit epsilon, ATP5PF/subunit F6, ATP5PB/subunit b, ATP5PD/subunit d, ATP5PO/subunit OSCP. ATP synthase complex consists of a soluble F(1) head domain (subunits alpha(3) and beta(3)) - the catalytic core - and a membrane F(0) domain - the membrane proton channel (subunits c, a, 8, e, f, g, k and j). These two domains are linked by a central stalk (subunits gamma, delta, and epsilon) rotating inside the F1 region and a stationary peripheral stalk (subunits F6, b, d, and OSCP). Ubiquitous.

The protein localises to the mitochondrion. It is found in the mitochondrion inner membrane. Subunit epsilon, of the mitochondrial membrane ATP synthase complex (F(1)F(0) ATP synthase or Complex V) that produces ATP from ADP in the presence of a proton gradient across the membrane which is generated by electron transport complexes of the respiratory chain. ATP synthase complex consist of a soluble F(1) head domain - the catalytic core - and a membrane F(1) domain - the membrane proton channel. These two domains are linked by a central stalk rotating inside the F(1) region and a stationary peripheral stalk. During catalysis, ATP synthesis in the catalytic domain of F(1) is coupled via a rotary mechanism of the central stalk subunits to proton translocation. In vivo, can only synthesize ATP although its ATP hydrolase activity can be activated artificially in vitro. May be essential for the assembly of F(1) and may play an important role in the incorporation of the hydrophobic subunit c into the F(1)-c oligomer rotor of the mitochondrial ATP synthase complex. The protein is ATP synthase F(1) complex subunit epsilon, mitochondrial of Homo sapiens (Human).